We begin with the raw amino-acid sequence, 154 residues long: IQ domain-containing protein F3 (154 aa).

The 30-residue stretch at Q89–L118 folds into the IQ domain.

In Homo sapiens (Human), this protein is IQ domain-containing protein F3 (IQCF3).